We begin with the raw amino-acid sequence, 241 residues long: uncharacterized protein (241 aa).

This is an uncharacterized protein from Methanocaldococcus jannaschii (strain ATCC 43067 / DSM 2661 / JAL-1 / JCM 10045 / NBRC 100440) (Methanococcus jannaschii).